Reading from the N-terminus, the 480-residue chain is Prostacyclin synthase (480 aa).

Residues 1 to 21 (MMWTALLLVGLSILVIVLYGR) form a helical membrane-spanning segment. Substrate-binding positions include R104, L110, N277, 338-339 (TR), and R362. Heme is bound at residue C421.

Belongs to the cytochrome P450 family. The cofactor is heme.

The protein resides in the endoplasmic reticulum membrane. It catalyses the reaction prostaglandin H2 = prostaglandin I2. It carries out the reaction a hydroperoxyeicosatetraenoate = an oxoeicosatetraenoate + H2O. The catalysed reaction is (15S)-hydroperoxy-(5Z,8Z,11Z,13E)-eicosatetraenoate = 15-oxo-(5Z,8Z,11Z,13E)-eicosatetraenoate + H2O. The enzyme catalyses (15S)-hydroperoxy-(5Z,8Z,11Z,13E)-eicosatetraenoate + AH2 = (15S)-hydroxy-(5Z,8Z,11Z,13E)-eicosatetraenoate + A + H2O. Catalyzes the isomerization of prostaglandin H2 to prostacyclin (= prostaglandin I2). Its function is as follows. Catalyzes the biosynthesis and metabolism of eicosanoids. Catalyzes the isomerization of prostaglandin H2 to prostacyclin (= prostaglandin I2), a potent mediator of vasodilation and inhibitor of platelet aggregation. Additionally, displays dehydratase activity, toward hydroperoxyeicosatetraenoates (HPETEs), especially toward (15S)-hydroperoxy-(5Z,8Z,11Z,13E)-eicosatetraenoate (15(S)-HPETE). This is Prostacyclin synthase from Danio rerio (Zebrafish).